We begin with the raw amino-acid sequence, 492 residues long: Forkhead box protein O6 (492 aa).

Disordered stretches follow at residues 1-76, 163-235, 315-338, and 466-492; these read MAAK…EVGP, SWWM…ASPA, GAGL…APRP, and FNFD…WVPG. Positions 88-182 form a DNA-binding region, fork-head; it reads WGNLSYADLI…KTGKTPRRRA (95 aa). Ser-184 is modified (phosphoserine). Residues 192–203 are compositionally biased toward basic residues; that stretch reads LRIKGKASKKKQ. Low complexity predominate over residues 225-235; sequence PAAAKWAASPA. Residues 472–486 are compositionally biased toward pro residues; the sequence is LPPPPPGLAGAPPPN.

Phosphorylation of Ser-184 is be important in regulating the transacriptional activity.

It is found in the cytoplasm. It localises to the nucleus. Its function is as follows. Transcriptional activator. The chain is Forkhead box protein O6 (FOXO6) from Homo sapiens (Human).